Reading from the N-terminus, the 212-residue chain is MQLFHLCLIIFCSCPTVQASKLCLGWLWGMDIDPYKEFGASVELLSFLPSDFFPSVRDLLDTASALYRDALESPEHCTPNHTALRQAILCWGELMTLASWVGNNLEDPAARDLVVNYVNTNMGLKIRQLLWFHISCLTFGRDTVLEYLVSFGVWIRTPPAYRPPNAPILSTLPETTVVRQRGRAPRRRTPSPRRRRSQSPRRRRSQSPASQC.

Residues 1-19 form the signal peptide; sequence MQLFHLCLIIFCSCPTVQA. The segment at 25–27 is HBEAG; it reads GWL. The interval 165 to 212 is disordered; it reads NAPILSTLPETTVVRQRGRAPRRRTPSPRRRRSQSPRRRRSQSPASQC. Positions 180–205 are enriched in basic residues; the sequence is QRGRAPRRRTPSPRRRRSQSPRRRRS. One copy of the 1; half-length repeat lies at 184 to 190; it reads APRRRTP. The 3 X 8 AA repeats of S-P-R-R-R-R-S-Q stretch occupies residues 184–206; that stretch reads APRRRTPSPRRRRSQSPRRRRSQ. Positions 184-212 are excised as a propeptide; the sequence is APRRRTPSPRRRRSQSPRRRRSQSPASQC. Repeat copies occupy residues 191-198 and 199-206.

This sequence belongs to the orthohepadnavirus precore antigen family. As to quaternary structure, homodimerizes. Post-translationally, phosphorylated. Cleaved by host furin.

The protein resides in the secreted. Its subcellular location is the host nucleus. Its function is as follows. May regulate immune response to the intracellular capsid in acting as a T-cell tolerogen, by having an immunoregulatory effect which prevents destruction of infected cells by cytotoxic T-cells. This immune regulation may predispose to chronicity during perinatal infections and prevent severe liver injury during adult infections. In Hepatitis B virus genotype H subtype adw4 (isolate Nicaragua/2928Nic/1997) (HBV-H), this protein is External core antigen.